We begin with the raw amino-acid sequence, 446 residues long: Glutamine synthetase (446 aa).

One can recognise a GS beta-grasp domain in the interval 14–106 (NNVKFIRFQF…VICDVYTTNG (93 aa)). The region spanning 113 to 446 (PRGCLKRVLA…DWETKQYLKI (334 aa)) is the GS catalytic domain. Residues Glu137 and Glu139 each coordinate Mg(2+). Glu187 lines the ATP pocket. Mg(2+) contacts are provided by Glu192 and Glu199. Residues 243–244 (NG) and Gly244 each bind L-glutamate. Mg(2+) is bound at residue His248. ATP is bound by residues 250-252 (HQS) and Ser252. Residues Arg301, Glu307, and Arg319 each contribute to the L-glutamate site. ATP is bound by residues Arg319, Arg324, and Lys331. Residue Glu336 participates in Mg(2+) binding. Arg338 contacts L-glutamate.

Belongs to the glutamine synthetase family. Oligomer of 12 subunits arranged in the form of two hexagons. Requires Mg(2+) as cofactor.

It localises to the cytoplasm. The enzyme catalyses L-glutamate + NH4(+) + ATP = L-glutamine + ADP + phosphate + H(+). In terms of biological role, probably involved in nitrogen metabolism via ammonium assimilation. Catalyzes the ATP-dependent biosynthesis of glutamine from glutamate and ammonia. The protein is Glutamine synthetase of Methanococcus maripaludis (strain DSM 14266 / JCM 13030 / NBRC 101832 / S2 / LL).